The following is a 306-amino-acid chain: D-alanine--D-alanine ligase B (306 aa).

Positions 101–303 (KLLWQGAGLP…FSQLVVRILE (203 aa)) constitute an ATP-grasp domain. 134–189 (ISALGLPVIVKPSREGSSVGMSKVVAENALQDALRLAFQHDEEVLIEKWLSGPEFT) is a binding site for ATP. Residues D257, E270, and N272 each contribute to the Mg(2+) site.

It belongs to the D-alanine--D-alanine ligase family. It depends on Mg(2+) as a cofactor. Mn(2+) is required as a cofactor.

Its subcellular location is the cytoplasm. It catalyses the reaction 2 D-alanine + ATP = D-alanyl-D-alanine + ADP + phosphate + H(+). It functions in the pathway cell wall biogenesis; peptidoglycan biosynthesis. Functionally, cell wall formation. The chain is D-alanine--D-alanine ligase B from Shigella flexneri.